Reading from the N-terminus, the 229-residue chain is MNKLNEALKKAERIVFLTGAGVSVPSGIPDYRSKNGLYAGMSSPEYMLSHTCLVREPEKFYQFVTENMYYPNAVPNVIHKKMAEIETEKDVTIITQNIDGLHEKAGSKKVVNFHGSLYHCYCQNCGMTVTAKDYLKSDIHTDCGGVIRPDVVLYEEAISESAIDQSLTAIRKADLIVIVGTSFRVSPFCNLTDYRNKKARIFAVNKERISLPYPFEMMESDAVKVFEEI.

Positions 1-229 (MNKLNEALKK…SDAVKVFEEI (229 aa)) constitute a Deacetylase sirtuin-type domain. The NAD(+) site is built by Ala-20, Arg-32, Gln-96, Ile-98, Asp-99, His-114, Thr-181, Ser-182, Asn-205, and Val-223. Residues Ile-98 and Asp-99 each contribute to the nicotinamide site. The Proton acceptor role is filled by His-114.

This sequence belongs to the sirtuin family. Class U subfamily.

Its subcellular location is the cytoplasm. The catalysed reaction is N(6)-acetyl-L-lysyl-[protein] + NAD(+) + H2O = 2''-O-acetyl-ADP-D-ribose + nicotinamide + L-lysyl-[protein]. NAD-dependent protein deacetylase which modulates the activities of several enzymes which are inactive in their acetylated form. The polypeptide is NAD-dependent protein deacetylase (Listeria monocytogenes serovar 1/2a (strain ATCC BAA-679 / EGD-e)).